We begin with the raw amino-acid sequence, 409 residues long: 2-methylfumaryl-CoA isomerase (409 aa).

D165 (nucleophile) is an active-site residue.

The protein belongs to the CoA-transferase III family. Mesaconyl-CoA isomerase subfamily. As to quaternary structure, homodimer.

It carries out the reaction 2-methylfumaryl-CoA = 3-methylfumaryl-CoA. Partially inhibited by hydroxylamine. Functionally, involved in the glyoxylate assimilation cycle used to regenerate acetyl-CoA and produce pyruvate as universal precursor for biosynthesis. This reaction involves an intramolecular CoA transferase that catalyzes the reversible transfer of the CoA moiety from the C1-carboxyl group of mesaconyl-CoA to the C4-carboxyl group. It does not require free mesaconate as CoA acceptor. This chain is 2-methylfumaryl-CoA isomerase (mct), found in Chloroflexus aurantiacus (strain ATCC 29366 / DSM 635 / J-10-fl).